Reading from the N-terminus, the 247-residue chain is Terpene cyclase ausL (247 aa).

The next 6 membrane-spanning stretches (helical) occupy residues 49-69 (AIAV…AWIY), 75-95 (HWQG…AATL), 114-134 (LVLL…CLAL), 138-158 (GALG…SGAV), 171-191 (SLVI…KLCI), and 206-226 (PMCW…PVLY).

Belongs to the paxB family.

The protein localises to the membrane. The protein operates within secondary metabolite biosynthesis; terpenoid biosynthesis. Functionally, terpene cyclase; part of the gene cluster that mediates the biosynthesis of calidodehydroaustin, a fungal meroterpenoid. The first step of the pathway is the synthesis of 3,5-dimethylorsellinic acid by the polyketide synthase ausA. 3,5-dimethylorsellinic acid is then prenylated by the polyprenyl transferase ausN. Further epoxidation by the FAD-dependent monooxygenase ausM and cyclization by the probable terpene cyclase ausL lead to the formation of protoaustinoid A. Protoaustinoid A is then oxidized to spiro-lactone preaustinoid A3 by the combined action of the FAD-binding monooxygenases ausB and ausC, and the dioxygenase ausE. Acid-catalyzed keto-rearrangement and ring contraction of the tetraketide portion of preaustinoid A3 by ausJ lead to the formation of preaustinoid A4. The aldo-keto reductase ausK, with the help of ausH, is involved in the next step by transforming preaustinoid A4 into isoaustinone which is in turn hydroxylated by the P450 monooxygenase ausI to form austinolide. The cytochrome P450 monooxygenase ausG modifies austinolide to austinol. Austinol is further acetylated to austin by the O-acetyltransferase ausP, which spontaneously changes to dehydroaustin. The cytochrome P450 monooxygenase ausR then converts dehydroaustin is into 7-dehydrodehydroaustin. The hydroxylation catalyzed by ausR permits the O-acetyltransferase ausQ to add an additional acetyl group to the molecule, leading to the formation of acetoxydehydroaustin. The short chain dehydrogenase ausT catalyzes the reduction of the double bond present between carbon atoms 1 and 2 to convert 7-dehydrodehydroaustin into 1,2-dihydro-7-hydroxydehydroaustin. AusQ catalyzes not only an acetylation reaction but also the addition of the PKS ausV diketide product to 1,2-dihydro-7-hydroxydehydroaustin, forming precalidodehydroaustin. Finally, the iron/alpha-ketoglutarate-dependent dioxygenase converts precalidodehydroaustin into calidodehydroaustin. This Aspergillus calidoustus protein is Terpene cyclase ausL.